Here is a 120-residue protein sequence, read N- to C-terminus: Movement protein TGB2 (120 aa).

The Cytoplasmic segment spans residues 1–16; sequence MSSTSEPTYQLAPPDS. The helical transmembrane segment at 17–37 threads the bilayer; the sequence is LKQVYLTLAAGFAVGLGIFLL. The Lumenal portion of the chain corresponds to 38–76; it reads RTNTLPHTGDNIHHLPHGGCYRDGTKSIRYNSPGVATSS. A helical transmembrane segment spans residues 77–97; the sequence is NIFLPAVAVLCILALLHVPFF. The Cytoplasmic segment spans residues 98-120; it reads QPDRVRRRCCRFYWCADPHHPTV.

The protein belongs to the Tymovirales TGBp2 protein family.

It localises to the host endoplasmic reticulum membrane. In terms of biological role, plays a role in viral cell-to-cell propagation, by facilitating genome transport to neighboring plant cells through plasmosdesmata,. The protein is Movement protein TGB2 (ORF3) of Lolium latent virus (isolate Lolium/USA/US1/-) (LoLV).